The primary structure comprises 229 residues: Peptidase E (229 aa).

Active-site charge relay system residues include Ser-120, Asp-135, and His-157.

This sequence belongs to the peptidase S51 family.

The protein localises to the cytoplasm. It catalyses the reaction Dipeptidase E catalyzes the hydrolysis of dipeptides Asp-|-Xaa. It does not act on peptides with N-terminal Glu, Asn or Gln, nor does it cleave isoaspartyl peptides.. Functionally, hydrolyzes dipeptides containing N-terminal aspartate residues. May play a role in allowing the cell to use peptide aspartate to spare carbon otherwise required for the synthesis of the aspartate family of amino acids. The protein is Peptidase E of Salmonella schwarzengrund (strain CVM19633).